Consider the following 546-residue polypeptide: Cytochrome P450 monooxygenase alnH (546 aa).

Residues 11–31 traverse the membrane as a helical segment; that stretch reads VPYSVPLLGSTVVILIGFIAI. N-linked (GlcNAc...) asparagine glycosylation is found at N146, N258, and N425. C445 provides a ligand contact to heme.

It belongs to the cytochrome P450 family. Heme is required as a cofactor.

The protein localises to the membrane. It functions in the pathway polyketide biosynthesis. Functionally, cytochrome P450 monooxygenase; part of the gene cluster that mediates the biosynthesis of asperlin, a polyketide showing anti-inflammatory, antitumor and antibiotic activities. The first step of the asperlin biosynthesis is the production of the intermediate 2,4,6-octatrienoic acid by the highly redusing polyketide synthase alnA with cleavage of the PKS product by the esterase alnB. 2,4,6-octatrienoic acid is further converted to asperlin via several steps involving the remaining enzymes from the cluster. The protein is Cytochrome P450 monooxygenase alnH of Emericella nidulans (strain FGSC A4 / ATCC 38163 / CBS 112.46 / NRRL 194 / M139) (Aspergillus nidulans).